We begin with the raw amino-acid sequence, 151 residues long: Large ribosomal subunit protein bL9 (151 aa).

This sequence belongs to the bacterial ribosomal protein bL9 family.

Binds to the 23S rRNA. This Azoarcus sp. (strain BH72) protein is Large ribosomal subunit protein bL9.